A 607-amino-acid polypeptide reads, in one-letter code: Elongation factor 4 (607 aa).

A tr-type G domain is found at Glu-11–Asp-193. GTP is bound by residues Asp-23 to Thr-28 and Asn-140 to Asp-143.

It belongs to the TRAFAC class translation factor GTPase superfamily. Classic translation factor GTPase family. LepA subfamily.

It localises to the cell membrane. The catalysed reaction is GTP + H2O = GDP + phosphate + H(+). Functionally, required for accurate and efficient protein synthesis under certain stress conditions. May act as a fidelity factor of the translation reaction, by catalyzing a one-codon backward translocation of tRNAs on improperly translocated ribosomes. Back-translocation proceeds from a post-translocation (POST) complex to a pre-translocation (PRE) complex, thus giving elongation factor G a second chance to translocate the tRNAs correctly. Binds to ribosomes in a GTP-dependent manner. The chain is Elongation factor 4 from Staphylococcus epidermidis (strain ATCC 35984 / DSM 28319 / BCRC 17069 / CCUG 31568 / BM 3577 / RP62A).